Here is a 103-residue protein sequence, read N- to C-terminus: uncharacterized protein (103 aa).

The chain crosses the membrane as a helical span at residues 35-57; the sequence is PFVSMFQTFLEVLTATVLAFTAY.

The protein localises to the host membrane. This is an uncharacterized protein from Acidianus bottle-shaped virus (isolate Italy/Pozzuoli) (ABV).